The chain runs to 1322 residues: Protein fantom (1322 aa).

The first 22 residues, 1-22, serve as a signal peptide directing secretion; it reads MVSARYPIEKWSRPQLEDHFHN. Residues 15–89 adopt a coiled-coil conformation; the sequence is QLEDHFHNVV…MKLKAAKQQL (75 aa). The segment covering 108 to 119 has biased composition (polar residues); the sequence is RSTFRQPPSTFR. Disordered stretches follow at residues 108 to 151, 189 to 275, and 392 to 418; these read RSTF…GEKL, KSSV…PDQT, and RIEE…SQSE. Residues 195 to 217 show a composition bias toward low complexity; the sequence is SSPPTRLSTSSSSKSSSSNNNND. Over residues 224–234 the composition is skewed to acidic residues; sequence ELEEMSEMSDD. Positions 274-362 form a coiled coil; that stretch reads QTEKVLLDKL…EDQKKFEAMR (89 aa). Positions 456-538 form a coiled coil; the sequence is ASENSLARWQ…FMLEEQIRTI (83 aa). Disordered regions lie at residues 891-1094 and 1121-1149; these read AELH…KPRN and TDPL…PVPL. Over residues 918–927 the composition is skewed to low complexity; the sequence is TDSSDTSFSH. Positions 956 to 975 are enriched in acidic residues; the sequence is SDGEEEADRIVFDDDDDEIE. Residues 984–996 show a composition bias toward basic and acidic residues; that stretch reads RDPEPLEVPERQV. The span at 1015–1029 shows a compositional bias: polar residues; the sequence is NGTNESKESTPVTQR. Over residues 1042–1067 the composition is skewed to acidic residues; that stretch reads PELEPESGPEPEPVVESEPNEVAETE. Residues 1068–1080 show a composition bias toward basic and acidic residues; it reads EDRKRELKTEELK. The segment covering 1127 to 1139 has biased composition (low complexity); that stretch reads SVPPSESSSTSSP.

The protein belongs to the RPGRIP1 family. As to expression, expressed at the transition zone at the base of cilia. Expressed in ciliated sensory neurons, including the amphid neurons in the head.

It localises to the cell projection. It is found in the cilium. Functionally, thought to have an important role in cilia formation and cilia-mediated chemosensation. Involved in the docking of other MKS/MKSR proteins localized to the transition zone of the cilia. The polypeptide is Protein fantom (mks-5) (Caenorhabditis elegans).